Here is a 415-residue protein sequence, read N- to C-terminus: Protein fuzzy homolog (415 aa).

Belongs to the fuzzy family. In terms of assembly, component of the CPLANE (ciliogenesis and planar polarity effectors) complex, composed of INTU, FUZ and WDPCP. Interacts with CPLANE1 and CPLANE2.

The protein localises to the cytoplasm. Its subcellular location is the cytoskeleton. It is found in the cilium basal body. In terms of biological role, probable planar cell polarity effector involved in cilium biogenesis. Proposed to function as core component of the CPLANE (ciliogenesis and planar polarity effectors) complex involved in the recruitment of peripheral IFT-A proteins to basal bodies. May regulate protein and membrane transport to the cilium. May regulate the morphogenesis of hair follicles which depends on functional primary cilia. Binds phosphatidylinositol 3-phosphate with highest affinity, followed by phosphatidylinositol 4-phosphate and phosphatidylinositol 5-phosphate. The protein is Protein fuzzy homolog (Fuz) of Rattus norvegicus (Rat).